The following is a 122-amino-acid chain: Large ribosomal subunit protein bL12 (122 aa).

The protein belongs to the bacterial ribosomal protein bL12 family. In terms of assembly, homodimer. Part of the ribosomal stalk of the 50S ribosomal subunit. Forms a multimeric L10(L12)X complex, where L10 forms an elongated spine to which 2 to 4 L12 dimers bind in a sequential fashion. Binds GTP-bound translation factors.

Forms part of the ribosomal stalk which helps the ribosome interact with GTP-bound translation factors. Is thus essential for accurate translation. This is Large ribosomal subunit protein bL12 from Staphylococcus saprophyticus subsp. saprophyticus (strain ATCC 15305 / DSM 20229 / NCIMB 8711 / NCTC 7292 / S-41).